The sequence spans 252 residues: 5-oxoprolinase subunit A (252 aa).

Belongs to the LamB/PxpA family. Forms a complex composed of PxpA, PxpB and PxpC.

It carries out the reaction 5-oxo-L-proline + ATP + 2 H2O = L-glutamate + ADP + phosphate + H(+). Functionally, catalyzes the cleavage of 5-oxoproline to form L-glutamate coupled to the hydrolysis of ATP to ADP and inorganic phosphate. The protein is 5-oxoprolinase subunit A of Bordetella pertussis (strain Tohama I / ATCC BAA-589 / NCTC 13251).